The chain runs to 393 residues: tRNA(Met) cytidine acetate ligase (393 aa).

Residues Gly-81, Asn-142, and Arg-167 each contribute to the ATP site.

It belongs to the TmcAL family.

It localises to the cytoplasm. The catalysed reaction is cytidine(34) in elongator tRNA(Met) + acetate + ATP = N(4)-acetylcytidine(34) in elongator tRNA(Met) + AMP + diphosphate. Catalyzes the formation of N(4)-acetylcytidine (ac(4)C) at the wobble position of elongator tRNA(Met), using acetate and ATP as substrates. First activates an acetate ion to form acetyladenylate (Ac-AMP) and then transfers the acetyl group to tRNA to form ac(4)C34. This chain is tRNA(Met) cytidine acetate ligase, found in Bacillus cereus (strain Q1).